The sequence spans 876 residues: DNA polymerase I (876 aa).

The 310-residue stretch at 1–310 (MKNKLVLIDG…FAIADSVTDE (310 aa)) folds into the 5'-3' exonuclease domain. Positions 289-876 (TDEGEKPLAG…HYGPTWYDAK (588 aa)) are subtilisin large fragment. The tract at residues 469–876 (EQDRLLTELE…HYGPTWYDAK (408 aa)) is polymerase.

The protein belongs to the DNA polymerase type-A family. As to quaternary structure, single-chain monomer with multiple functions.

It catalyses the reaction DNA(n) + a 2'-deoxyribonucleoside 5'-triphosphate = DNA(n+1) + diphosphate. Its function is as follows. In addition to polymerase activity, the recombinant enzyme has strand displacement and 5'-3' exonuclease activity, but lacks proofreading 3'-5' exonuclease activity. The protein is DNA polymerase I (polA) of Geobacillus stearothermophilus (Bacillus stearothermophilus).